The chain runs to 1005 residues: Mitogen-activated protein kinase kinase kinase 10 (1005 aa).

One can recognise an SH3 domain in the interval 32–96 (VSNPLWMAVF…PSNYVVSDDK (65 aa)). The region spanning 118–380 (LNLDEIIGVG…SCILEQLTTI (263 aa)) is the Protein kinase domain. ATP is bound by residues 124-132 (IGVGGFGKV) and lysine 145. The Proton acceptor role is filled by aspartate 242. 2 leucine-zipper regions span residues 404 to 425 (IQQMFDELRTKEKELRSREEEL) and 439 to 460 (LKRREQELAEREIDIVERELNI). 4 disordered regions span residues 551–611 (SVLK…KHTP), 647–676 (QSDHRSHPEDTAHAGAPSSDSPKRGSQSRR), 712–736 (FQWAGRGPRRRASSPSRSMSYGEDS), and 758–940 (RSLI…AEGA). Basic and acidic residues-rich tracts occupy residues 576 to 588 (QKERVGGEERLKT) and 648 to 658 (SDHRSHPEDTA). Basic and acidic residues-rich tracts occupy residues 761 to 786 (IRSDSDDIGLDHDNVSSGRGVKEDRG) and 799 to 809 (YKVESFKRDPK). Over residues 810–826 (QSLTPTHVTVGRNNTTE) the composition is skewed to polar residues. A compositionally biased stretch (pro residues) spans 862–879 (EPSPFPRLPDPHFVFPPP). Residues 915–940 (SLSQTHSSSPSSGGGDACSSGSAEGA) are compositionally biased toward low complexity.

The protein belongs to the protein kinase superfamily. STE Ser/Thr protein kinase family. MAP kinase kinase kinase subfamily. Homodimer. Binds to the GTPase rac1 but not cdc42 or rhoA. Interacts (via kinase domain) with pak1 (via kinase domain). Interacts with the ubiquitin-conjugating enzyme ube2d4. It depends on Mg(2+) as a cofactor. Autophosphorylation on serine and threonine residues within the activation loop plays a role in enzyme activation. Post-translationally, mono- and poly-ubiquitinated. As to expression, in adults, strongly expressed in the brain and spleen with lower levels in pancreas, heart, muscle and kidney (at protein level). In the developing embryo, expressed at stage 22 in the cement gland. Weakly expressed in the pronephros from stage 24 or 25, with expression increasing in strength by stage 30 and continuing at least until stage 37. Expression in the developing pronephros correlates with epithelialization of the proximal pronephric tubules.

The enzyme catalyses L-seryl-[protein] + ATP = O-phospho-L-seryl-[protein] + ADP + H(+). It carries out the reaction L-threonyl-[protein] + ATP = O-phospho-L-threonyl-[protein] + ADP + H(+). With respect to regulation, homodimerization via the leucine zipper domains is required for autophosphorylation and subsequent activation. Its function is as follows. Activates the JUN N-terminal pathway. Essential for pronephros and cement gland development. This Xenopus laevis (African clawed frog) protein is Mitogen-activated protein kinase kinase kinase 10 (map3k10).